Reading from the N-terminus, the 251-residue chain is Ribonuclease 3 (251 aa).

One can recognise an RNase III domain in the interval 3–125; sequence LATLETRLGH…LFGAVFLDAG (123 aa). A Mg(2+)-binding site is contributed by glutamate 38. Aspartate 42 is an active-site residue. Residues aspartate 111 and glutamate 114 each contribute to the Mg(2+) site. The active site involves glutamate 114. The 71-residue stretch at 152 to 222 folds into the DRBM domain; it reads DAKTLLQEFL…AKLALEAALV (71 aa).

The protein belongs to the ribonuclease III family. Homodimer. It depends on Mg(2+) as a cofactor.

Its subcellular location is the cytoplasm. It catalyses the reaction Endonucleolytic cleavage to 5'-phosphomonoester.. Digests double-stranded RNA. Involved in the processing of primary rRNA transcript to yield the immediate precursors to the large and small rRNAs (23S and 16S). Processes some mRNAs, and tRNAs when they are encoded in the rRNA operon. Processes pre-crRNA and tracrRNA of type II CRISPR loci if present in the organism. The polypeptide is Ribonuclease 3 (Bordetella avium (strain 197N)).